A 199-amino-acid polypeptide reads, in one-letter code: CASP-like protein 1D2 (199 aa).

Residues 1 to 27 (MASTENPDPETGKSEPIPASATPPPSS) are disordered. Position 2 is an N-acetylalanine (A2). Residues 2-36 (ASTENPDPETGKSEPIPASATPPPSSAASFLDCRK) are Cytoplasmic-facing. A helical membrane pass occupies residues 37–57 (IDIITRVLLFSATLTALIVMV). The Extracellular portion of the chain corresponds to 58 to 85 (TSDQTEMTQLPGVSSPAPVSAEFNDSPA). A helical membrane pass occupies residues 86 to 106 (FIYFVVALVVASFYALISTLV). Residues 107-129 (SISLLLKPEFTAQFSIYLASLDM) are Cytoplasmic-facing. A helical transmembrane segment spans residues 130 to 150 (VMLGILASATGTAGGVAYIAL). Residues 151–171 (KGNEEVGWNKICNVYDKFCRY) lie on the Extracellular side of the membrane. Residues 172-192 (IATSLALSLFASLLLLVLSIW) traverse the membrane as a helical segment. Topologically, residues 193–199 (SALSKRT) are cytoplasmic.

This sequence belongs to the Casparian strip membrane proteins (CASP) family. Homodimer and heterodimers. As to expression, expressed in the root endodermis and flowers.

It localises to the cell membrane. The sequence is that of CASP-like protein 1D2 from Arabidopsis thaliana (Mouse-ear cress).